A 484-amino-acid polypeptide reads, in one-letter code: tRNA-2-methylthio-N(6)-dimethylallyladenosine synthase (484 aa).

In terms of domain architecture, MTTase N-terminal spans 36-153 (GKLYIKTHGC…LPELIRARRE (118 aa)). Positions 45, 82, 116, 190, 194, and 197 each coordinate [4Fe-4S] cluster. One can recognise a Radical SAM core domain in the interval 176 to 415 (RAEGPSAFVS…HINAHAASIS (240 aa)). The region spanning 416–479 (QSMVGSVQRV…SNSLRGRIQL (64 aa)) is the TRAM domain. A disordered region spans residues 428–450 (EGPSRRDPNELTGKSENMRPVNF).

It belongs to the methylthiotransferase family. MiaB subfamily. Monomer. [4Fe-4S] cluster serves as cofactor.

It localises to the cytoplasm. It carries out the reaction N(6)-dimethylallyladenosine(37) in tRNA + (sulfur carrier)-SH + AH2 + 2 S-adenosyl-L-methionine = 2-methylsulfanyl-N(6)-dimethylallyladenosine(37) in tRNA + (sulfur carrier)-H + 5'-deoxyadenosine + L-methionine + A + S-adenosyl-L-homocysteine + 2 H(+). In terms of biological role, catalyzes the methylthiolation of N6-(dimethylallyl)adenosine (i(6)A), leading to the formation of 2-methylthio-N6-(dimethylallyl)adenosine (ms(2)i(6)A) at position 37 in tRNAs that read codons beginning with uridine. In Xanthomonas euvesicatoria pv. vesicatoria (strain 85-10) (Xanthomonas campestris pv. vesicatoria), this protein is tRNA-2-methylthio-N(6)-dimethylallyladenosine synthase.